A 438-amino-acid polypeptide reads, in one-letter code: V-type ATP synthase beta chain (438 aa).

Belongs to the ATPase alpha/beta chains family.

In terms of biological role, produces ATP from ADP in the presence of a proton gradient across the membrane. The V-type beta chain is a regulatory subunit. This is V-type ATP synthase beta chain from Chlamydia trachomatis serovar L2b (strain UCH-1/proctitis).